The primary structure comprises 607 residues: MRGAARLGRPGRSCLPGARGLRAPPPPPLLLLLALLPLLPAPGAAAAPAPRPPELQSASAGPSVSLYLSEDEVRRLIGLDAELYYVRNDLISHYALSFSLLVPSETNFLHFTWHAKSKVEYKLGFQVDNVLAMDMPQVNISVQGEVPRTLSVFRVELSCTGKVDSEVMILMQLNLTVNSSKNFTVLNFKRRKMCYKKLEEVKTSALDKNTSRTIYDPVHAAPTTSTRVFYISVGVCCAVIFLVAIILAVLHLHSMKRIELDDSISASSSSQGLSQPSTQTTQYLRADTPNNATPITSYPTLRIEKNDLRSVTLLEAKGKVKDIAISRERITLKDVLQEGTFGRIFHGILIDEKDPNKEKQAFVKTVKDQASEIQVTMMLTESCKLRGLHHRNLLPITHVCIEEGEKPMVILPYMNWGNLKLFLRQCKLVEANNPQAISQQDLVHMAIQIACGMSYLARREVIHKDLAARNCVIDDTLQVKITDNALSRDLFPMDYHCLGDNENRPVRWMALESLVNNEFSSASDVWAFGVTLWELMTLGQTPYVDIDPFEMAAYLKDGYRIAQPINCPDELFAVMACCWALDPEERPKFQQLVQCLTEFHAALGAYV.

The segment at 1–20 (MRGAARLGRPGRSCLPGARG) is disordered. The first 25 residues, 1–25 (MRGAARLGRPGRSCLPGARGLRAPP), serve as a signal peptide directing secretion. Topologically, residues 26 to 227 (PPPLLLLLAL…VHAAPTTSTR (202 aa)) are extracellular. The WIF domain occupies 66-194 (LYLSEDEVRR…VLNFKRRKMC (129 aa)). N-linked (GlcNAc...) asparagine glycosylation is found at Asn-139, Asn-174, Asn-178, Asn-182, and Asn-209. Cys-159 and Cys-194 form a disulfide bridge. Residues 228 to 248 (VFYISVGVCCAVIFLVAIILA) form a helical membrane-spanning segment. Residues 249–607 (VLHLHSMKRI…EFHAALGAYV (359 aa)) are Cytoplasmic-facing. The span at 266–282 (ASSSSQGLSQPSTQTTQ) shows a compositional bias: low complexity. The segment at 266–290 (ASSSSQGLSQPSTQTTQYLRADTPN) is disordered. The Protein kinase domain occupies 330–603 (ITLKDVLQEG…QCLTEFHAAL (274 aa)). ATP contacts are provided by residues 336–344 (LQEGTFGRI) and Lys-364. Residue Asp-465 is the Proton acceptor of the active site. Phosphotyrosine; by autocatalysis is present on Tyr-495.

It belongs to the protein kinase superfamily. Tyr protein kinase family. In terms of assembly, interacts with DVL1 (via PDZ domain). Post-translationally, proteolytically cleaved, in part by presenilin, in response to WNT3 stimulation. Cleavage occurs during neuronal differentiation. In terms of tissue distribution, observed in all the tissues examined.

It is found in the membrane. It localises to the nucleus. The protein localises to the cytoplasm. It carries out the reaction L-tyrosyl-[protein] + ATP = O-phospho-L-tyrosyl-[protein] + ADP + H(+). In terms of biological role, may be a coreceptor along with FZD8 of Wnt proteins, such as WNT1, WNT3, WNT3A and WNT5A. Involved in neuron differentiation, axon guidance, corpus callosum establishment and neurite outgrowth. In response to WNT3 stimulation, receptor C-terminal cleavage occurs in its transmembrane region and allows the C-terminal intracellular product to translocate from the cytoplasm to the nucleus where it plays a crucial role in neuronal development. The sequence is that of Tyrosine-protein kinase RYK from Homo sapiens (Human).